The sequence spans 567 residues: Dihydroxy-acid dehydratase (567 aa).

Cys52 contributes to the [2Fe-2S] cluster binding site. Asp84 serves as a coordination point for Mg(2+). A [2Fe-2S] cluster-binding site is contributed by Cys125. Mg(2+) is bound by residues Asp126 and Lys127. An N6-carboxylysine modification is found at Lys127. Cys197 is a binding site for [2Fe-2S] cluster. Mg(2+) is bound at residue Glu448. Ser474 (proton acceptor) is an active-site residue.

The protein belongs to the IlvD/Edd family. Homodimer. [2Fe-2S] cluster serves as cofactor. Requires Mg(2+) as cofactor.

The catalysed reaction is (2R)-2,3-dihydroxy-3-methylbutanoate = 3-methyl-2-oxobutanoate + H2O. It catalyses the reaction (2R,3R)-2,3-dihydroxy-3-methylpentanoate = (S)-3-methyl-2-oxopentanoate + H2O. It participates in amino-acid biosynthesis; L-isoleucine biosynthesis; L-isoleucine from 2-oxobutanoate: step 3/4. It functions in the pathway amino-acid biosynthesis; L-valine biosynthesis; L-valine from pyruvate: step 3/4. Functions in the biosynthesis of branched-chain amino acids. Catalyzes the dehydration of (2R,3R)-2,3-dihydroxy-3-methylpentanoate (2,3-dihydroxy-3-methylvalerate) into 2-oxo-3-methylpentanoate (2-oxo-3-methylvalerate) and of (2R)-2,3-dihydroxy-3-methylbutanoate (2,3-dihydroxyisovalerate) into 2-oxo-3-methylbutanoate (2-oxoisovalerate), the penultimate precursor to L-isoleucine and L-valine, respectively. In Streptococcus pneumoniae serotype 2 (strain D39 / NCTC 7466), this protein is Dihydroxy-acid dehydratase.